The following is a 286-amino-acid chain: MWQAISRLLSEQLGEGEIELRNELPGGEVHAAWHLRYAGHDFFVKCDERELLPGFTAEADQLELLSRSKTVTVPKVWAVGADRDYSFLVMDYLPPRPLDAHSAFILGQQIARLHQWSDQPQFGLDFDNSLSTTPQPNTWQRRWSTFFAEQRIGWQLELAAEKGIAFGNIDAIVEHIQQRLASHQPQPSLLHGDLWSGNCALGPDGPYIFDPACYWGDRECDLAMLPLHTEQPPQIYDGYQSVSPLPADFLERQPVYQLYTLLNRARLFGGQHLVIAQQSLDRLLAA.

91-93 (DYL) contacts ATP. D193 serves as the catalytic Proton acceptor.

Belongs to the fructosamine kinase family.

Its function is as follows. Ketoamine kinase that phosphorylates ketoamines on the third carbon of the sugar moiety to generate ketoamine 3-phosphate. This Escherichia coli O157:H7 protein is Probable ketoamine kinase YniA (yniA).